Consider the following 185-residue polypeptide: Elongation factor P (185 aa).

The protein belongs to the elongation factor P family.

The protein localises to the cytoplasm. Its pathway is protein biosynthesis; polypeptide chain elongation. In terms of biological role, involved in peptide bond synthesis. Stimulates efficient translation and peptide-bond synthesis on native or reconstituted 70S ribosomes in vitro. Probably functions indirectly by altering the affinity of the ribosome for aminoacyl-tRNA, thus increasing their reactivity as acceptors for peptidyl transferase. This Kosmotoga olearia (strain ATCC BAA-1733 / DSM 21960 / TBF 19.5.1) protein is Elongation factor P.